The primary structure comprises 145 residues: uncharacterized protein (145 aa).

Belongs to the SAP18 family.

It is found in the cytoplasm. Its subcellular location is the nucleus. This is an uncharacterized protein from Schizosaccharomyces pombe (strain 972 / ATCC 24843) (Fission yeast).